Consider the following 516-residue polypeptide: (R)-citramalate synthase CimA (516 aa).

The region spanning 8–269 (LEILDVTLRD…KTNINEIAIT (262 aa)) is the Pyruvate carboxyltransferase domain. Arg-16 functions as the Proton donor in the catalytic mechanism. Pyruvate is bound by residues 16-17 (RD) and Tyr-144. Position 17 (Asp-17) interacts with Mn(2+). Glu-146 functions as the Proton acceptor in the catalytic mechanism. Thr-179 lines the pyruvate pocket. Mn(2+) is bound by residues His-207 and His-209.

It belongs to the alpha-IPM synthase/homocitrate synthase family. As to quaternary structure, homodimer. Mn(2+) is required as a cofactor.

It carries out the reaction pyruvate + acetyl-CoA + H2O = (3R)-citramalate + CoA + H(+). The protein operates within amino-acid biosynthesis; L-isoleucine biosynthesis; 2-oxobutanoate from pyruvate: step 1/3. Regulated by the end-product isoleucine via a feedback inhibition. The binding of isoleucine has inhibitory effects on the binding of both pyruvate and acetyl-CoA. May act via conformational change of the dimer interface of the regulatory domain, leading to inhibition of the catalytic reaction. Its function is as follows. Catalyzes the condensation of pyruvate and acetyl-coenzyme A to form (R)-citramalate. Shows strict substrate specificity for pyruvate. Cannot use alpha-ketoisovalerate, alpha-ketobutyrate, alpha-ketoisocaproate, alpha-ketoglutarate or glyoxylate. In Leptospira interrogans serogroup Icterohaemorrhagiae serovar Lai (strain 56601), this protein is (R)-citramalate synthase CimA.